A 248-amino-acid chain; its full sequence is MYKLVLIRHGESTWNKENRFTGWVDVDLTEQGRNEAYQAGELLKEAGYTFDIAYTSVLKRAIRTLWHVQDRMDLMYLPVVHSWRLNERHYGALSGLNKAETAAKFGDDQVLVWRRSYDTPPPALEPTDERAPFNDPRYAKVPREQLPLTECLKDTVARVLPLWNESIAPAVRSGKQVLIAAHGNSLRALIKYLDGISDSDIVGLNIPNGVPLVYELDEDLKPIQHYYLGDQDAIAKAQAAVAKQGKAG.

Residues 8 to 15 (RHGESTWN), 21 to 22 (TG), arginine 60, 87 to 90 (ERHY), lysine 98, 114 to 115 (RR), and 183 to 184 (GN) contribute to the substrate site. Histidine 9 functions as the Tele-phosphohistidine intermediate in the catalytic mechanism. The active-site Proton donor/acceptor is glutamate 87.

This sequence belongs to the phosphoglycerate mutase family. BPG-dependent PGAM subfamily. As to quaternary structure, homodimer.

The enzyme catalyses (2R)-2-phosphoglycerate = (2R)-3-phosphoglycerate. Its pathway is carbohydrate degradation; glycolysis; pyruvate from D-glyceraldehyde 3-phosphate: step 3/5. Its function is as follows. Catalyzes the interconversion of 2-phosphoglycerate and 3-phosphoglycerate. The chain is 2,3-bisphosphoglycerate-dependent phosphoglycerate mutase from Burkholderia ambifaria (strain ATCC BAA-244 / DSM 16087 / CCUG 44356 / LMG 19182 / AMMD) (Burkholderia cepacia (strain AMMD)).